A 126-amino-acid polypeptide reads, in one-letter code: Diadenosine hexaphosphate hydrolase (126 aa).

The Nudix hydrolase domain occupies 1-121; sequence MELGAGGVVF…EDLGLLEVAL (121 aa). Residues 21–23 and 30–32 each bind substrate; these read DRM and KGH. The Nudix box signature appears at 31–52; that stretch reads GHPEPGESLEEAAVREVWEETG. Glutamate 46 and glutamate 50 together coordinate Mg(2+). Substrate-binding positions include 66–68, arginine 74, and glutamate 112; that span reads YVN.

This sequence belongs to the Nudix hydrolase family. In terms of assembly, monomer. The cofactor is Mg(2+).

The catalysed reaction is P(1),P(6)-bis(5'-adenosyl) hexaphosphate + H2O = 2 ATP + 2 H(+). It catalyses the reaction P(1),P(5)-bis(5'-adenosyl) pentaphosphate + H2O = ADP + ATP + 2 H(+). It carries out the reaction P(1),P(4)-bis(5'-adenosyl) tetraphosphate + H2O = AMP + ATP + 2 H(+). Strongly inhibited by fluoride ions. Its function is as follows. Specifically hydrolyzes (di)adenosine polyphosphates but not ATP or diadenosine triphosphate, generating ATP as the product. Diadenosine hexaphosphate (Ap6A) is the preferred substrate and hydrolysis yields 2 ATP. It is the only enzyme that symmetrically hydrolyzes Ap6A. It also hydrolyzes diadenosine pentaphosphate (Ap5A), diadenosine tetraphosphate (Ap4A) and adenosine tetraphosphate (p4A). The sequence is that of Diadenosine hexaphosphate hydrolase from Thermus thermophilus.